We begin with the raw amino-acid sequence, 351 residues long: Cytoplasmic dynein 2 light intermediate chain 1 (351 aa).

Belongs to the dynein light intermediate chain family. As to quaternary structure, light intermediate chain of the cytoplasmic dynein complex 2, a multisubunit complex composed at least of eleven different proteins. The cytoplasmic dynein 2 complex consists of two catalytic heavy chains (HCs) and a number of non-catalytic subunits presented by intermediate chains (ICs), light intermediate chains (LICs) and light chains (LCs). Among them, a heavy chain (DYNC2H1), two intermediate chains (DYNC2I2 and DYNC2I1), a light intermediate chain (DYNC2LI1), and a light chain (DYNLT2B) are unique to the dynein-2 complex, but a subset of light chains are also shared by dynein-1 and dynein-2 complexes. Dynein-2 complex is built around two copies of cytoplasmic dynein 2 heavy chain 1 (DYNC2H1). The C-terminal region of DYNC2H1 forms the motor domain, which converts the energy from ATP hydrolysis into movement. Its N-terminal region forms the tail, an extended structure that binds the other subunits and holds the two heavy chains in a homodimer. Interacts with DYNC2H1 (via N-terminus); this interaction stabilizes the dynein-2 complex structure. Expressed in bone, brain, kidney, and cartilage. Lower expression in heart, liver, lung, placenta and thymus.

It is found in the golgi apparatus. It localises to the cytoplasm. Its subcellular location is the cell projection. The protein resides in the cilium. The protein localises to the cytoskeleton. It is found in the cilium basal body. It localises to the cilium axoneme. Its subcellular location is the microtubule organizing center. The protein resides in the centrosome. Acts as one of several non-catalytic accessory components of the cytoplasmic dynein 2 complex (dynein-2 complex), a motor protein complex that drives the movement of cargos along microtubules within cilia and flagella in concert with the intraflagellar transport (IFT) system, facilitating the assembly of these organelles. Involved in the regulation of ciliary length. This chain is Cytoplasmic dynein 2 light intermediate chain 1 (DYNC2LI1), found in Homo sapiens (Human).